Here is a 629-residue protein sequence, read N- to C-terminus: Interleukin-23 receptor (629 aa).

Residues 1–23 form the signal peptide; that stretch reads MNQVTIQWDAVIALYILFSWCHG. Residues 24 to 355 lie on the Extracellular side of the membrane; that stretch reads GITNINCSGH…LTSDNRGDIG (332 aa). The N-linked (GlcNAc...) asparagine; partial glycan is linked to Asn29. N-linked (GlcNAc...) asparagine glycans are attached at residues Asn47, Asn81, and Asn141. 2 Fibronectin type-III domains span residues 127–217 and 219–318; these read IPDE…LDDI and IPSA…TPET. The N-linked (GlcNAc...) (high mannose) asparagine glycan is linked to Asn180. 2 N-linked (GlcNAc...) asparagine glycosylation sites follow: Asn232 and Asn262. Asn273 is a glycosylation site (N-linked (GlcNAc...) asparagine; partial). A helical transmembrane segment spans residues 356-376; that stretch reads LLLGMIVFAVMLSILSLIGIF. At 377-629 the chain is on the cytoplasmic side; that stretch reads NRSFRTGIKR…HFNRISLLEK (253 aa).

This sequence belongs to the type I cytokine receptor family. Type 2 subfamily. As to quaternary structure, heterodimer with IL12RB1. In presence of IL23, the heterodimer forms the IL23 receptor. Interacts with JAK2 and in presence of IL23 with STAT3. Post-translationally, phosphorylated in response to IL23. As to expression, expressed by monocytes, Th1, Th0, NK and dendritic cells. Isoform 1 is specifically expressed in NK cells.

It is found in the cell membrane. Functionally, associates with IL12RB1 to form the interleukin-23 receptor. Binds IL23 and mediates T-cells, NK cells and possibly certain macrophage/myeloid cells stimulation probably through activation of the Jak-Stat signaling cascade. IL23 functions in innate and adaptive immunity and may participate in acute response to infection in peripheral tissues. IL23 may be responsible for autoimmune inflammatory diseases and be important for tumorigenesis. In Homo sapiens (Human), this protein is Interleukin-23 receptor (IL23R).